The primary structure comprises 209 residues: Regulator of G-protein signaling 1 (209 aa).

The interval 19–42 is disordered; sequence FSASPKDSKEHSHSLLDDKKQKKR. Residues 24 to 38 show a composition bias toward basic and acidic residues; that stretch reads KDSKEHSHSLLDDKK. Positions 85–200 constitute an RGS domain; that stretch reads SLEKLLANQT…LKSNIYLNLL (116 aa).

As to quaternary structure, interacts with GNAI1 and GNAQ. Detected in spleen, lymph node and intestine.

It is found in the cell membrane. Its subcellular location is the cytoplasm. It localises to the cytosol. Functionally, regulates G protein-coupled receptor signaling cascades, including signaling downstream of the N-formylpeptide chemoattractant receptors and leukotriene receptors. Inhibits B cell chemotaxis toward CXCL12. Inhibits signal transduction by increasing the GTPase activity of G protein alpha subunits thereby driving them into their inactive GDP-bound form. This Mus musculus (Mouse) protein is Regulator of G-protein signaling 1 (Rgs1).